Here is a 565-residue protein sequence, read N- to C-terminus: Oxygen-dependent choline dehydrogenase (565 aa).

6–35 contributes to the FAD binding site; it reads DYIIVGAGSAGNTLATRLTEDAGVTVLLLE. Catalysis depends on His-475, which acts as the Proton acceptor.

It belongs to the GMC oxidoreductase family. FAD is required as a cofactor.

The catalysed reaction is choline + A = betaine aldehyde + AH2. It catalyses the reaction betaine aldehyde + NAD(+) + H2O = glycine betaine + NADH + 2 H(+). The protein operates within amine and polyamine biosynthesis; betaine biosynthesis via choline pathway; betaine aldehyde from choline (cytochrome c reductase route): step 1/1. Functionally, involved in the biosynthesis of the osmoprotectant glycine betaine. Catalyzes the oxidation of choline to betaine aldehyde and betaine aldehyde to glycine betaine at the same rate. In Pseudomonas putida (strain ATCC 700007 / DSM 6899 / JCM 31910 / BCRC 17059 / LMG 24140 / F1), this protein is Oxygen-dependent choline dehydrogenase.